Reading from the N-terminus, the 144-residue chain is Large ribosomal subunit protein uL16 (144 aa).

Residues 1–19 show a composition bias toward basic residues; sequence MLLPKRVKYRRQHRPKTTG. The tract at residues 1–23 is disordered; that stretch reads MLLPKRVKYRRQHRPKTTGRSKG.

It belongs to the universal ribosomal protein uL16 family. As to quaternary structure, part of the 50S ribosomal subunit.

Its function is as follows. Binds 23S rRNA and is also seen to make contacts with the A and possibly P site tRNAs. The chain is Large ribosomal subunit protein uL16 from Staphylococcus aureus (strain Mu50 / ATCC 700699).